Here is a 207-residue protein sequence, read N- to C-terminus: Guanylate kinase (207 aa).

The Guanylate kinase-like domain maps to 4–184; the sequence is GTLYIVSAPS…ALLDLKTIIR (181 aa). Position 11 to 18 (11 to 18) interacts with ATP; sequence APSGAGKS.

It belongs to the guanylate kinase family.

The protein localises to the cytoplasm. It carries out the reaction GMP + ATP = GDP + ADP. Essential for recycling GMP and indirectly, cGMP. The polypeptide is Guanylate kinase (Sodalis glossinidius (strain morsitans)).